Reading from the N-terminus, the 218-residue chain is 3-dehydroquinate dehydratase (218 aa).

3-dehydroquinate is bound by residues 29–31 (EFR) and Arg56. The Proton donor/acceptor role is filled by His116. The active-site Schiff-base intermediate with substrate is the Lys142. Residues Arg180, Ser200, and Gln204 each coordinate 3-dehydroquinate.

The protein belongs to the type-I 3-dehydroquinase family. As to quaternary structure, homodimer.

It carries out the reaction 3-dehydroquinate = 3-dehydroshikimate + H2O. Its pathway is metabolic intermediate biosynthesis; chorismate biosynthesis; chorismate from D-erythrose 4-phosphate and phosphoenolpyruvate: step 3/7. Its function is as follows. Involved in the third step of the chorismate pathway, which leads to the biosynthesis of aromatic amino acids. Catalyzes the cis-dehydration of 3-dehydroquinate (DHQ) and introduces the first double bond of the aromatic ring to yield 3-dehydroshikimate. The chain is 3-dehydroquinate dehydratase from Methanococcus maripaludis (strain C5 / ATCC BAA-1333).